Reading from the N-terminus, the 636-residue chain is 1-deoxy-D-xylulose-5-phosphate synthase (636 aa).

Thiamine diphosphate-binding positions include His-74 and 115–117; that span reads GHA. Asp-146 is a Mg(2+) binding site. Residues 147-148, Asn-175, Tyr-285, and Glu-368 contribute to the thiamine diphosphate site; that span reads GA. Residue Asn-175 participates in Mg(2+) binding.

This sequence belongs to the transketolase family. DXPS subfamily. In terms of assembly, homodimer. Requires Mg(2+) as cofactor. It depends on thiamine diphosphate as a cofactor.

It catalyses the reaction D-glyceraldehyde 3-phosphate + pyruvate + H(+) = 1-deoxy-D-xylulose 5-phosphate + CO2. It functions in the pathway metabolic intermediate biosynthesis; 1-deoxy-D-xylulose 5-phosphate biosynthesis; 1-deoxy-D-xylulose 5-phosphate from D-glyceraldehyde 3-phosphate and pyruvate: step 1/1. Functionally, catalyzes the acyloin condensation reaction between C atoms 2 and 3 of pyruvate and glyceraldehyde 3-phosphate to yield 1-deoxy-D-xylulose-5-phosphate (DXP). The polypeptide is 1-deoxy-D-xylulose-5-phosphate synthase (Anaeromyxobacter dehalogenans (strain 2CP-C)).